The chain runs to 121 residues: Large ribosomal subunit protein uL18 (121 aa).

Belongs to the universal ribosomal protein uL18 family. As to quaternary structure, part of the 50S ribosomal subunit; part of the 5S rRNA/L5/L18/L25 subcomplex. Contacts the 5S and 23S rRNAs.

Its function is as follows. This is one of the proteins that bind and probably mediate the attachment of the 5S RNA into the large ribosomal subunit, where it forms part of the central protuberance. The sequence is that of Large ribosomal subunit protein uL18 from Burkholderia multivorans (strain ATCC 17616 / 249).